Consider the following 695-residue polypeptide: G-patch and R3H domain-containing protein C30B4.02c (695 aa).

Disordered regions lie at residues 168–200 (SDKEISSTEESEQLCYKEQESEKELYSKDNDDS), 213–242 (DIANNNAAPPPPLAQAQEQLSTENEDEFDI), 257–317 (FADL…FDEG), 332–351 (GNTDSLAEDEDDILEEDEDE), 388–448 (DSED…VAAR), and 475–517 (DKSK…DSDN). Basic and acidic residues predominate over residues 182–198 (CYKEQESEKELYSKDND). Acidic residues-rich tracts occupy residues 262 to 286 (VLEEDDDDEDEDEELEGEKEEEEEE), 307 to 317 (EDSESLEFDEG), and 337 to 351 (LAEDEDDILEEDEDE). Residues 421-434 (KKDRKLPKKMRKAQ) are compositionally biased toward basic residues. Residues 525 to 587 (KIFINDVYQR…KRYTMLSKTH (63 aa)) form the R3H domain. The G-patch domain maps to 652–695 (KENPGRRLLEKLGWYAGKGLGHPENEGSKDSLRAIVKVSRSGLG).

It localises to the cytoplasm. In Schizosaccharomyces pombe (strain 972 / ATCC 24843) (Fission yeast), this protein is G-patch and R3H domain-containing protein C30B4.02c.